The sequence spans 535 residues: Lecithin-cholesterol acyltransferase-like 4 (535 aa).

Position 2 is an N-acetylserine (Ser-2). The Acyl-ester intermediate role is filled by Ser-182. Active-site charge relay system residues include Asp-391 and His-416. The span at 488–505 shows a compositional bias: polar residues; sequence STVNSISVSQPGDDQNPQ. The disordered stretch occupies residues 488-507; that stretch reads STVNSISVSQPGDDQNPQAE.

It belongs to the AB hydrolase superfamily. Lipase family.

The protein is Lecithin-cholesterol acyltransferase-like 4 (LCAT4) of Arabidopsis thaliana (Mouse-ear cress).